The sequence spans 345 residues: S-adenosylmethionine:tRNA ribosyltransferase-isomerase (345 aa).

This sequence belongs to the QueA family. As to quaternary structure, monomer.

The protein localises to the cytoplasm. It carries out the reaction 7-aminomethyl-7-carbaguanosine(34) in tRNA + S-adenosyl-L-methionine = epoxyqueuosine(34) in tRNA + adenine + L-methionine + 2 H(+). Its pathway is tRNA modification; tRNA-queuosine biosynthesis. In terms of biological role, transfers and isomerizes the ribose moiety from AdoMet to the 7-aminomethyl group of 7-deazaguanine (preQ1-tRNA) to give epoxyqueuosine (oQ-tRNA). The sequence is that of S-adenosylmethionine:tRNA ribosyltransferase-isomerase from Shewanella baltica (strain OS185).